Here is a 379-residue protein sequence, read N- to C-terminus: Cytochrome b (379 aa).

4 helical membrane passes run 33 to 53, 77 to 98, 113 to 133, and 178 to 198; these read FGSL…FLAM, WLIR…YLHI, WNIG…GYVL, and FFAF…IHFF. Heme b is bound by residues His-83 and His-97. Heme b-binding residues include His-182 and His-196. His-201 contributes to the a ubiquinone binding site. 4 helical membrane passes run 226-246, 288-308, 320-340, and 347-367; these read IKDI…VLFS, LGGV…PMLH, FSQC…WIGG, and YITI…IVSR.

This sequence belongs to the cytochrome b family. In terms of assembly, the cytochrome bc1 complex contains 11 subunits: 3 respiratory subunits (MT-CYB, CYC1 and UQCRFS1), 2 core proteins (UQCRC1 and UQCRC2) and 6 low-molecular weight proteins (UQCRH/QCR6, UQCRB/QCR7, UQCRQ/QCR8, UQCR10/QCR9, UQCR11/QCR10 and a cleavage product of UQCRFS1). This cytochrome bc1 complex then forms a dimer. The cofactor is heme b.

It is found in the mitochondrion inner membrane. Functionally, component of the ubiquinol-cytochrome c reductase complex (complex III or cytochrome b-c1 complex) that is part of the mitochondrial respiratory chain. The b-c1 complex mediates electron transfer from ubiquinol to cytochrome c. Contributes to the generation of a proton gradient across the mitochondrial membrane that is then used for ATP synthesis. The protein is Cytochrome b (MT-CYB) of Dolichotis patagonum (Patagonian mara).